A 481-amino-acid polypeptide reads, in one-letter code: Phosphoglycerate kinase 1, chloroplastic (481 aa).

The N-terminal 75 residues, 1-75 (MASAAASSAF…VRGKGSRGVV (75 aa)), are a transit peptide targeting the chloroplast. A Phosphoserine modification is found at serine 81. The (2R)-3-phosphoglycerate site is built by alanine 99, aspartate 100, asparagine 102, arginine 116, threonine 138, histidine 139, glycine 141, arginine 142, arginine 197, histidine 229, and arginine 230. Position 275 (glycine 275) interacts with ADP. Glycine 275 provides a ligand contact to CDP. The AMP site is built by lysine 277 and lysine 281. Lysine 281 provides a ligand contact to ATP. Glycine 299 contacts ADP. Glycine 299 provides a ligand contact to CDP. AMP is bound by residues glycine 300 and glycine 372. Residues glycine 300 and glycine 372 each contribute to the ATP site. 2 residues coordinate CDP: glycine 397 and phenylalanine 402. An ADP-binding site is contributed by phenylalanine 402. An AMP-binding site is contributed by glutamate 403. Residues glutamate 403, aspartate 434, and serine 435 each contribute to the ATP site. Aspartate 434 is a binding site for Mg(2+).

This sequence belongs to the phosphoglycerate kinase family. As to quaternary structure, monomer. Binds to FTSZ2-1 and FTSZ2-2. It depends on Mg(2+) as a cofactor.

It is found in the plastid. Its subcellular location is the chloroplast. The enzyme catalyses (2R)-3-phosphoglycerate + ATP = (2R)-3-phospho-glyceroyl phosphate + ADP. It functions in the pathway carbohydrate biosynthesis; Calvin cycle. Its function is as follows. May trigger the phosphorylation of FTSZ2-1 and FTSZ2-2. The protein is Phosphoglycerate kinase 1, chloroplastic of Arabidopsis thaliana (Mouse-ear cress).